Reading from the N-terminus, the 579-residue chain is Pentatricopeptide repeat-containing protein At2g15690, mitochondrial (579 aa).

The N-terminal 49 residues, 1 to 49, are a transit peptide targeting the mitochondrion; the sequence is MSSLMAIRCARTQNIVTIGSLLQLRSSFPRLSSQFHFSGTLNSIPIKHL. Composition is skewed to polar residues over residues 56–71 and 78–103; these read NDYH…SQHQ and SFDS…TQHG. Positions 56-208 are disordered; sequence NDYHQNPQSG…QMNEVAPPPS (153 aa). 2 stretches are compositionally biased toward low complexity: residues 117–136 and 148–199; these read GGQR…QMSQ and RPQY…SPNQ. 5 PPR repeats span residues 235-269, 270-300, 301-335, 336-371, and 372-402; these read DREC…KFRG, DPKL…MVDK, DMDS…GLKP, NEET…GISP, and KTEH…LPFE. A type DYW motif region spans residues 485-579; the sequence is GVVYVPDTRF…DGKCSCGDYW (95 aa).

It belongs to the PPR family. PCMP-H subfamily.

It localises to the mitochondrion. This Arabidopsis thaliana (Mouse-ear cress) protein is Pentatricopeptide repeat-containing protein At2g15690, mitochondrial (PCMP-H66).